The following is a 190-amino-acid chain: Glutathione peroxidase 2 (190 aa).

Sec-40 is a catalytic residue. Position 40 (Sec-40) is a non-standard amino acid, selenocysteine.

It belongs to the glutathione peroxidase family. Homotetramer.

It is found in the cytoplasm. The protein resides in the cytosol. The catalysed reaction is 2 glutathione + H2O2 = glutathione disulfide + 2 H2O. It catalyses the reaction a hydroperoxy polyunsaturated fatty acid + 2 glutathione = a hydroxy polyunsaturated fatty acid + glutathione disulfide + H2O. The enzyme catalyses tert-butyl hydroperoxide + 2 glutathione = tert-butanol + glutathione disulfide + H2O. It carries out the reaction cumene hydroperoxide + 2 glutathione = 2-phenylpropan-2-ol + glutathione disulfide + H2O. The catalysed reaction is (13S)-hydroperoxy-(9Z,11E)-octadecadienoate + 2 glutathione = (13S)-hydroxy-(9Z,11E)-octadecadienoate + glutathione disulfide + H2O. It catalyses the reaction (5S)-hydroperoxy-(6E,8Z,11Z,14Z)-eicosatetraenoate + 2 glutathione = (5S)-hydroxy-(6E,8Z,11Z,14Z)-eicosatetraenoate + glutathione disulfide + H2O. The enzyme catalyses (12R)-hydroperoxy-(5Z,8Z,10E,14Z)-eicosatetraenoate + 2 glutathione = (12R)-hydroxy-(5Z,8Z,10E,14Z)-eicosatetraenoate + glutathione disulfide + H2O. It carries out the reaction (15S)-hydroperoxy-(5Z,8Z,11Z,13E)-eicosatetraenoate + 2 glutathione = (15S)-hydroxy-(5Z,8Z,11Z,13E)-eicosatetraenoate + glutathione disulfide + H2O. Functionally, catalyzes the reduction of hydroperoxides in a glutathione-dependent manner thus regulating cellular redox homeostasis. Can reduce small soluble hydroperoxides such as H2O2, cumene hydroperoxide and tert-butyl hydroperoxide, as well as several fatty acid-derived hydroperoxides. Cannot reduce phosphatidycholine hydroperoxide. The chain is Glutathione peroxidase 2 (Gpx2) from Mus musculus (Mouse).